The sequence spans 935 residues: Protein translocase subunit SecA (935 aa).

ATP is bound by residues Q90, 108–112 (GEGKT), and D504.

Belongs to the SecA family. As to quaternary structure, monomer and homodimer. Part of the essential Sec protein translocation apparatus which comprises SecA, SecYEG and auxiliary proteins SecDF. Other proteins may also be involved.

It is found in the cell inner membrane. The protein localises to the cellular thylakoid membrane. The protein resides in the cytoplasm. It catalyses the reaction ATP + H2O + cellular proteinSide 1 = ADP + phosphate + cellular proteinSide 2.. Its function is as follows. Part of the Sec protein translocase complex. Interacts with the SecYEG preprotein conducting channel. Has a central role in coupling the hydrolysis of ATP to the transfer of proteins into and across the cell membrane, serving as an ATP-driven molecular motor driving the stepwise translocation of polypeptide chains across the membrane. In terms of biological role, probably participates in protein translocation into and across both the cytoplasmic and thylakoid membranes in cyanobacterial cells. The polypeptide is Protein translocase subunit SecA (Gloeothece citriformis (strain PCC 7424) (Cyanothece sp. (strain PCC 7424))).